The sequence spans 502 residues: Probable cytosol aminopeptidase (502 aa).

2 residues coordinate Mn(2+): Lys-270 and Asp-275. Residue Lys-282 is part of the active site. Mn(2+) is bound by residues Asp-293, Asp-352, and Glu-354. Arg-356 is a catalytic residue.

This sequence belongs to the peptidase M17 family. It depends on Mn(2+) as a cofactor.

The protein resides in the cytoplasm. It carries out the reaction Release of an N-terminal amino acid, Xaa-|-Yaa-, in which Xaa is preferably Leu, but may be other amino acids including Pro although not Arg or Lys, and Yaa may be Pro. Amino acid amides and methyl esters are also readily hydrolyzed, but rates on arylamides are exceedingly low.. The enzyme catalyses Release of an N-terminal amino acid, preferentially leucine, but not glutamic or aspartic acids.. Presumably involved in the processing and regular turnover of intracellular proteins. Catalyzes the removal of unsubstituted N-terminal amino acids from various peptides. The protein is Probable cytosol aminopeptidase of Desulfotalea psychrophila (strain LSv54 / DSM 12343).